A 355-amino-acid polypeptide reads, in one-letter code: Histidinol-phosphate aminotransferase 2 (355 aa).

Lys-213 is modified (N6-(pyridoxal phosphate)lysine).

Belongs to the class-II pyridoxal-phosphate-dependent aminotransferase family. Histidinol-phosphate aminotransferase subfamily. Homodimer. The cofactor is pyridoxal 5'-phosphate.

The catalysed reaction is L-histidinol phosphate + 2-oxoglutarate = 3-(imidazol-4-yl)-2-oxopropyl phosphate + L-glutamate. It functions in the pathway amino-acid biosynthesis; L-histidine biosynthesis; L-histidine from 5-phospho-alpha-D-ribose 1-diphosphate: step 7/9. The protein is Histidinol-phosphate aminotransferase 2 of Burkholderia lata (strain ATCC 17760 / DSM 23089 / LMG 22485 / NCIMB 9086 / R18194 / 383).